The primary structure comprises 901 residues: Protein translocase subunit SecA (901 aa).

Residues Gln-85, 103 to 107 (GEGKT), and Asp-510 each bind ATP. Residues 848–901 (RINQNNLPVDENSQTTQNSETEDYSDRRIGRNEPCPCGSGKKYKHCHGSRVARQ) are disordered. The segment covering 849–866 (INQNNLPVDENSQTTQNS) has biased composition (polar residues). 4 residues coordinate Zn(2+): Cys-882, Cys-884, Cys-893, and His-894. The segment covering 888 to 901 (KKYKHCHGSRVARQ) has biased composition (basic residues).

The protein belongs to the SecA family. Monomer and homodimer. Part of the essential Sec protein translocation apparatus which comprises SecA, SecYEG and auxiliary proteins SecDF-YajC and YidC. Zn(2+) is required as a cofactor.

The protein localises to the cell inner membrane. It is found in the cytoplasm. It carries out the reaction ATP + H2O + cellular proteinSide 1 = ADP + phosphate + cellular proteinSide 2.. In terms of biological role, part of the Sec protein translocase complex. Interacts with the SecYEG preprotein conducting channel. Has a central role in coupling the hydrolysis of ATP to the transfer of proteins into and across the cell membrane, serving both as a receptor for the preprotein-SecB complex and as an ATP-driven molecular motor driving the stepwise translocation of polypeptide chains across the membrane. The polypeptide is Protein translocase subunit SecA (Haemophilus influenzae (strain 86-028NP)).